Consider the following 236-residue polypeptide: Alpha-S2-casein (236 aa).

A signal peptide spans 1–15 (MKFFIFTCLLAVALA). Phosphoserine occurs at positions 23, 24, 25, 28, 47, 80, 81, 82, 85, 157, and 169. The tract at residues 72-93 (PTEVYSSSSSSEESAKFPTERE) is disordered. A compositionally biased stretch (basic and acidic residues) spans 84–93 (ESAKFPTERE).

The protein belongs to the alpha-casein family. In terms of processing, there are at least three different forms found in milk, with varying degrees of phosphorylation. These include form 10-P which is phosphorylated at ten sites that have not been determined, form 11-P which is phosphorylated at eleven sites and form 12-P which is phosphorylated at twelve sites. In terms of tissue distribution, mammary gland specific. Secreted in milk.

Its subcellular location is the secreted. Its function is as follows. Important role in the capacity of milk to transport calcium phosphate. This is Alpha-S2-casein from Equus asinus (Donkey).